A 418-amino-acid polypeptide reads, in one-letter code: Glutamyl-tRNA reductase (418 aa).

Residues Thr49 to Arg52, Ser106, Glu111 to Gln113, and Gln117 each bind substrate. Cys50 functions as the Nucleophile in the catalytic mechanism. Gly186–Ile191 is an NADP(+) binding site.

The protein belongs to the glutamyl-tRNA reductase family. As to quaternary structure, homodimer.

It carries out the reaction (S)-4-amino-5-oxopentanoate + tRNA(Glu) + NADP(+) = L-glutamyl-tRNA(Glu) + NADPH + H(+). It participates in porphyrin-containing compound metabolism; protoporphyrin-IX biosynthesis; 5-aminolevulinate from L-glutamyl-tRNA(Glu): step 1/2. Functionally, catalyzes the NADPH-dependent reduction of glutamyl-tRNA(Glu) to glutamate 1-semialdehyde (GSA). The sequence is that of Glutamyl-tRNA reductase from Alcanivorax borkumensis (strain ATCC 700651 / DSM 11573 / NCIMB 13689 / SK2).